An 855-amino-acid polypeptide reads, in one-letter code: Pre-mRNA-splicing factor SYF1 (855 aa).

HAT repeat units follow at residues 15 to 47 (LVFEEEDLPYEEEIMRNQFSVKCWLRYIEFKQG), 48 to 80 (APKPRLNQLYERALKLLPCSYKLWYRYLKARRA), 90 to 122 (PAYEDVNNCHERAFVFMHKMPRLWLDYCQFLMD), 124 to 158 (GRVTHTRRTFDRALRALPITQHSRIWPLYLRFLRS), 160 to 192 (PLPETAVRGYRRFLKLSPESAEEYIEYLKSSDR), 198 to 230 (QRLATVVNDERFVSKAGKSNYQLWHELCDLISQ), 235 to 268 (VQSLNVDAIIRGGLTRFTDQLGKLWCSLADYYIR), 270 to 305 (GHFEKARDVYEEAIRTVMTVRDFTQVFDSYAQFEES), and 369 to 407 (GRPREIINTYTEAVQTVDPFKATGKPHTLWVAFAKFYED). N6-acetyllysine is present on Lys-420. HAT repeat units lie at residues 498-530 (GTFQSTKAVYDRILDLRIATPQIVINYAMFLEE), 532-566 (KYFEESFKAYERGISLFKWPNVSDIWSTYLTKFIA), 571-605 (RKLERARDLFEQALDGCPPKYAKTLYLLYAQLEEE), 643-677 (YGVTHTRGIYQKAIEVLSDEHAREMCLRFADMECK), and 679-713 (GEIDRARAIYSFCSQICDPRTTGAFWQTWKDFEVR). Residues 810-855 (LAQQVNPEEIQLGEDEDEDEMDLEPNEVRLEQQSVPAAVFGSLKED) are disordered. Residues 820-834 (QLGEDEDEDEMDLEP) show a composition bias toward acidic residues. Residue Ser-851 is modified to Phosphoserine.

This sequence belongs to the crooked-neck family. In terms of assembly, associates with RNA polymerase II, the TCR-specific proteins CKN1/CSA and ERCC6/CSB, and XPA. Identified in the spliceosome C complex. Component of the XAB2 complex, a multimeric protein complex composed of XAB2, PRPF19, AQR, ZNF830, ISY1, and PPIE. Identified in a pentameric intron-binding (IB) complex composed of AQR, XAB2, ISY1, ZNF830 and PPIE that is incorporated into the spliceosome as a preassembled complex. The IB complex does not contain PRPF19.

It is found in the nucleus. In terms of biological role, involved in pre-mRNA splicing as component of the spliceosome. Involved in transcription-coupled repair (TCR), transcription and pre-mRNA splicing. In Homo sapiens (Human), this protein is Pre-mRNA-splicing factor SYF1 (XAB2).